The primary structure comprises 85 residues: Putative RING finger protein 095L (85 aa).

Residues 39 to 73 form an RING-type; degenerate zinc finger; sequence CPIWYNYQVNTVFLPCAHVACYLCSKIIKNCHLCR.

This Invertebrate iridescent virus 6 (IIV-6) protein is Putative RING finger protein 095L.